The primary structure comprises 352 residues: Molybdenum import ATP-binding protein ModC (352 aa).

The region spanning 1 to 229 (MLELNFSQTL…SVMNPWLPKE (229 aa)) is the ABC transporter domain. 31 to 38 (GVSGAGKT) is an ATP binding site. Positions 289 to 352 (QTSIRNVLRA…AQIKSVSITA (64 aa)) constitute a Mop domain.

Belongs to the ABC transporter superfamily. Molybdate importer (TC 3.A.1.8) family. In terms of assembly, the complex is composed of two ATP-binding proteins (ModC), two transmembrane proteins (ModB) and a solute-binding protein (ModA).

Its subcellular location is the cell inner membrane. It carries out the reaction molybdate(out) + ATP + H2O = molybdate(in) + ADP + phosphate + H(+). In terms of biological role, part of the ABC transporter complex ModABC involved in molybdenum import. Responsible for energy coupling to the transport system. This is Molybdenum import ATP-binding protein ModC from Shigella boydii serotype 4 (strain Sb227).